Consider the following 233-residue polypeptide: Sugar fermentation stimulation protein homolog (233 aa).

Belongs to the SfsA family.

In Acetivibrio thermocellus (strain ATCC 27405 / DSM 1237 / JCM 9322 / NBRC 103400 / NCIMB 10682 / NRRL B-4536 / VPI 7372) (Clostridium thermocellum), this protein is Sugar fermentation stimulation protein homolog.